The chain runs to 603 residues: Elongation factor 4 (603 aa).

The tr-type G domain maps to 7 to 189 (SHIRNFSIIA…SIVHLVPPPR (183 aa)). Residues 19–24 (DHGKST) and 136–139 (NKID) each bind GTP.

Belongs to the TRAFAC class translation factor GTPase superfamily. Classic translation factor GTPase family. LepA subfamily.

Its subcellular location is the cell inner membrane. It carries out the reaction GTP + H2O = GDP + phosphate + H(+). Its function is as follows. Required for accurate and efficient protein synthesis under certain stress conditions. May act as a fidelity factor of the translation reaction, by catalyzing a one-codon backward translocation of tRNAs on improperly translocated ribosomes. Back-translocation proceeds from a post-translocation (POST) complex to a pre-translocation (PRE) complex, thus giving elongation factor G a second chance to translocate the tRNAs correctly. Binds to ribosomes in a GTP-dependent manner. The protein is Elongation factor 4 of Thermosynechococcus vestitus (strain NIES-2133 / IAM M-273 / BP-1).